The chain runs to 256 residues: Thiazole synthase (256 aa).

The active-site Schiff-base intermediate with DXP is the K96. Residues G157, 184-185 (AG), and 206-207 (NT) each bind 1-deoxy-D-xylulose 5-phosphate.

It belongs to the ThiG family. In terms of assembly, homotetramer. Forms heterodimers with either ThiH or ThiS.

Its subcellular location is the cytoplasm. It carries out the reaction [ThiS sulfur-carrier protein]-C-terminal-Gly-aminoethanethioate + 2-iminoacetate + 1-deoxy-D-xylulose 5-phosphate = [ThiS sulfur-carrier protein]-C-terminal Gly-Gly + 2-[(2R,5Z)-2-carboxy-4-methylthiazol-5(2H)-ylidene]ethyl phosphate + 2 H2O + H(+). Its pathway is cofactor biosynthesis; thiamine diphosphate biosynthesis. In terms of biological role, catalyzes the rearrangement of 1-deoxy-D-xylulose 5-phosphate (DXP) to produce the thiazole phosphate moiety of thiamine. Sulfur is provided by the thiocarboxylate moiety of the carrier protein ThiS. In vitro, sulfur can be provided by H(2)S. This is Thiazole synthase from Brucella abortus (strain S19).